The sequence spans 274 residues: Acyl-[acyl-carrier-protein]--UDP-N-acetylglucosamine O-acyltransferase (274 aa).

It belongs to the transferase hexapeptide repeat family. LpxA subfamily. In terms of assembly, homotrimer.

The protein resides in the cytoplasm. It carries out the reaction a (3R)-hydroxyacyl-[ACP] + UDP-N-acetyl-alpha-D-glucosamine = a UDP-3-O-[(3R)-3-hydroxyacyl]-N-acetyl-alpha-D-glucosamine + holo-[ACP]. Its pathway is glycolipid biosynthesis; lipid IV(A) biosynthesis; lipid IV(A) from (3R)-3-hydroxytetradecanoyl-[acyl-carrier-protein] and UDP-N-acetyl-alpha-D-glucosamine: step 1/6. In terms of biological role, involved in the biosynthesis of lipid A, a phosphorylated glycolipid that anchors the lipopolysaccharide to the outer membrane of the cell. This Bartonella quintana (strain Toulouse) (Rochalimaea quintana) protein is Acyl-[acyl-carrier-protein]--UDP-N-acetylglucosamine O-acyltransferase.